Here is a 144-residue protein sequence, read N- to C-terminus: Ribonuclease H (144 aa).

The 141-residue stretch at 1–141 (MDKIDIYSDG…ADALANRGVE (141 aa)) folds into the RNase H type-1 domain. 4 residues coordinate Mg(2+): Asp-9, Glu-47, Asp-69, and Asp-133.

The protein belongs to the RNase H family. In terms of assembly, monomer. Mg(2+) serves as cofactor.

The protein resides in the cytoplasm. It catalyses the reaction Endonucleolytic cleavage to 5'-phosphomonoester.. Functionally, endonuclease that specifically degrades the RNA of RNA-DNA hybrids. The sequence is that of Ribonuclease H from Janthinobacterium sp. (strain Marseille) (Minibacterium massiliensis).